Consider the following 294-residue polypeptide: Cytidine deaminase (294 aa).

2 consecutive CMP/dCMP-type deaminase domains span residues 48–168 and 186–294; these read DEDA…FGPK and LTGD…VLLG. Substrate is bound at residue 89-91; it reads NME. Position 102 (histidine 102) interacts with Zn(2+). The active-site Proton donor is glutamate 104. Positions 129 and 132 each coordinate Zn(2+).

Belongs to the cytidine and deoxycytidylate deaminase family. In terms of assembly, homodimer. It depends on Zn(2+) as a cofactor.

It catalyses the reaction cytidine + H2O + H(+) = uridine + NH4(+). It carries out the reaction 2'-deoxycytidine + H2O + H(+) = 2'-deoxyuridine + NH4(+). Its function is as follows. This enzyme scavenges exogenous and endogenous cytidine and 2'-deoxycytidine for UMP synthesis. The protein is Cytidine deaminase of Salmonella arizonae (strain ATCC BAA-731 / CDC346-86 / RSK2980).